Reading from the N-terminus, the 196-residue chain is C-type lectin domain family 2 member F (196 aa).

The segment at 1–21 (MNAQCLKKPEEGESSPGTGDK) is disordered. Over 1-41 (MNAQCLKKPEEGESSPGTGDKILQRNSLRAISPESSAKLYC) the chain is Cytoplasmic. The helical; Signal-anchor for type II membrane protein transmembrane segment at 42 to 62 (CCGVIMVLTVAVVALSVALPA) threads the bilayer. The Extracellular portion of the chain corresponds to 63 to 196 (TKTEQILINK…SRSSNYMLQC (134 aa)). Residues Cys-77 and Cys-88 are joined by a disulfide bond. The region spanning 84–187 (VGNKCFYFSE…DYIPRKWICS (104 aa)) is the C-type lectin domain. A glycan (N-linked (GlcNAc...) asparagine) is linked at Asn-97. A disulfide bond links Cys-105 and Cys-186.

The protein resides in the cell membrane. In terms of biological role, lectin-type cell surface receptor. This chain is C-type lectin domain family 2 member F (Clec2f), found in Mus musculus (Mouse).